The following is a 514-amino-acid chain: GMP synthase [glutamine-hydrolyzing] (514 aa).

Positions 7 to 197 (KVLILDFGSQ…LFNICKCERN (191 aa)) constitute a Glutamine amidotransferase type-1 domain. Cys-84 (nucleophile) is an active-site residue. Catalysis depends on residues His-171 and Glu-173. Positions 198–389 (WNMGSFIEYE…LKLPEDIVYR (192 aa)) constitute a GMPS ATP-PPase domain. 225-231 (SGGVDSS) serves as a coordination point for ATP.

In terms of assembly, homodimer.

The enzyme catalyses XMP + L-glutamine + ATP + H2O = GMP + L-glutamate + AMP + diphosphate + 2 H(+). It functions in the pathway purine metabolism; GMP biosynthesis; GMP from XMP (L-Gln route): step 1/1. Catalyzes the synthesis of GMP from XMP. This chain is GMP synthase [glutamine-hydrolyzing], found in Brachyspira hyodysenteriae (strain ATCC 49526 / WA1).